The following is a 495-amino-acid chain: Thioredoxin reductase SEP1 (495 aa).

37–54 (DFVKPSPPGTTWGLGGTC) is a binding site for FAD. Cysteines 54 and 59 form a disulfide. Catalysis depends on His468, which acts as the Proton acceptor. Residues 493–494 (CU) constitute a cross-link (cysteinyl-selenocysteine (Cys-Sec)). A non-standard amino acid (selenocysteine) is located at residue Sec494.

This sequence belongs to the class-I pyridine nucleotide-disulfide oxidoreductase family. In terms of assembly, homodimer. FAD serves as cofactor. In terms of processing, the N-terminus is blocked.

It carries out the reaction [thioredoxin]-dithiol + NADP(+) = [thioredoxin]-disulfide + NADPH + H(+). With respect to regulation, activity was very low in selenium-depleted cells, but increased 4-fold to the same level as in selenium-sufficient cells for 70 hours after the addition of 10 nm selenite. In Emiliania huxleyi (Coccolithophore), this protein is Thioredoxin reductase SEP1 (SEP1).